The sequence spans 117 residues: Large ribosomal subunit protein bL20 (117 aa).

The protein belongs to the bacterial ribosomal protein bL20 family.

In terms of biological role, binds directly to 23S ribosomal RNA and is necessary for the in vitro assembly process of the 50S ribosomal subunit. It is not involved in the protein synthesizing functions of that subunit. The protein is Large ribosomal subunit protein bL20 of Wolinella succinogenes (strain ATCC 29543 / DSM 1740 / CCUG 13145 / JCM 31913 / LMG 7466 / NCTC 11488 / FDC 602W) (Vibrio succinogenes).